A 324-amino-acid polypeptide reads, in one-letter code: Arginase (324 aa).

The Mn(2+) site is built by H115, D143, H145, and D147. Residues 145–149, 156–158, and D202 each bind substrate; these read HADIN and SGN. Residues D249 and D251 each contribute to the Mn(2+) site. Substrate contacts are provided by T263 and E294.

It belongs to the arginase family. In terms of assembly, homotrimer. Mn(2+) is required as a cofactor.

The enzyme catalyses L-arginine + H2O = urea + L-ornithine. The protein operates within nitrogen metabolism; urea cycle; L-ornithine and urea from L-arginine: step 1/1. The protein is Arginase (agaA) of Emericella nidulans (strain FGSC A4 / ATCC 38163 / CBS 112.46 / NRRL 194 / M139) (Aspergillus nidulans).